We begin with the raw amino-acid sequence, 518 residues long: MKKLKINYLFIGILALLLAVALWPSIPWFGKADNRIAAIQARGELRVSTINTPLTYNEINGKPFGLDYELAKQFADYLGVKLKVTVRQNISQLFDDLDNGNADLLAAGLVYNSERVKNYQPGPTYYSVSQQLVYKVGQYRPRTLGNLTAEQLTVAPGHVVVNDLQTLKETKFPELSWKVDDKKGSAELMEDVIEGKLDYTIADSVAISLFQRVHPELAVALDITDEQPVTWFSPLDGDNTLSAALLDFFNEMNEDGTLARIEEKYLGHGDDFDYVDTRTFLRAVDAVLPQLKPLFEKYAEEIDWRLLAAIAYQESHWDAQATSPTGVRGMMMLTKNTAQSLGITDRTDAEQSISGGVRYLQDMMSKVPESVPENERIWFALAAYNMGYAHMLDARALTAKTKGNPDSWADVKQRLPLLSQKPYYSKLTYGYARGHEAYAYVENIRKYQISLVGYLQEKEKQATEAAMQLAQDYPAVSPTELGKEKFPFLSFLSQSSSNYLTHSPSLLFSRKGSEEKQN.

Positions 1 to 21 are cleaved as a signal peptide; the sequence is MKKLKINYLFIGILALLLAVA. Residues 22-269 form a non-LT domain region; the sequence is LWPSIPWFGK…RIEEKYLGHG (248 aa). The segment at 270 to 518 is LT domain; the sequence is DDFDYVDTRT…SRKGSEEKQN (249 aa). Residue Glu314 is part of the active site.

This sequence in the N-terminal section; belongs to the bacterial solute-binding protein 3 family. In the C-terminal section; belongs to the transglycosylase Slt family.

Its subcellular location is the cell outer membrane. It catalyses the reaction Exolytic cleavage of the (1-&gt;4)-beta-glycosidic linkage between N-acetylmuramic acid (MurNAc) and N-acetylglucosamine (GlcNAc) residues in peptidoglycan, from either the reducing or the non-reducing ends of the peptidoglycan chains, with concomitant formation of a 1,6-anhydrobond in the MurNAc residue.. Its function is as follows. Murein-degrading enzyme that degrades murein glycan strands and insoluble, high-molecular weight murein sacculi, with the concomitant formation of a 1,6-anhydromuramoyl product. Lytic transglycosylases (LTs) play an integral role in the metabolism of the peptidoglycan (PG) sacculus. Their lytic action creates space within the PG sacculus to allow for its expansion as well as for the insertion of various structures such as secretion systems and flagella. This Escherichia coli (strain SMS-3-5 / SECEC) protein is Membrane-bound lytic murein transglycosylase F.